The sequence spans 98 residues: NADH-ubiquinone oxidoreductase chain 4L (98 aa).

3 consecutive transmembrane segments (helical) span residues 1-21 (MTTM…GVYI), 29-49 (TLLC…LTLL), and 59-79 (FPLI…ALLV).

The protein belongs to the complex I subunit 4L family. Core subunit of respiratory chain NADH dehydrogenase (Complex I) which is composed of 45 different subunits.

The protein resides in the mitochondrion inner membrane. The enzyme catalyses a ubiquinone + NADH + 5 H(+)(in) = a ubiquinol + NAD(+) + 4 H(+)(out). In terms of biological role, core subunit of the mitochondrial membrane respiratory chain NADH dehydrogenase (Complex I) which catalyzes electron transfer from NADH through the respiratory chain, using ubiquinone as an electron acceptor. Part of the enzyme membrane arm which is embedded in the lipid bilayer and involved in proton translocation. The chain is NADH-ubiquinone oxidoreductase chain 4L (MT-ND4L) from Zaglossus bruijni (Western long-beaked echidna).